The sequence spans 225 residues: UPF0758 protein Vapar_4033 (225 aa).

One can recognise an MPN domain in the interval Val-103 to Leu-225. Zn(2+) contacts are provided by His-174, His-176, and Asp-187. The short motif at His-174–Asp-187 is the JAMM motif element.

It belongs to the UPF0758 family.

In Variovorax paradoxus (strain S110), this protein is UPF0758 protein Vapar_4033.